The primary structure comprises 157 residues: S-ribosylhomocysteine lyase (157 aa).

Fe cation-binding residues include His54, His58, and Cys124.

Belongs to the LuxS family. Homodimer. Fe cation is required as a cofactor.

It catalyses the reaction S-(5-deoxy-D-ribos-5-yl)-L-homocysteine = (S)-4,5-dihydroxypentane-2,3-dione + L-homocysteine. In terms of biological role, involved in the synthesis of autoinducer 2 (AI-2) which is secreted by bacteria and is used to communicate both the cell density and the metabolic potential of the environment. The regulation of gene expression in response to changes in cell density is called quorum sensing. Catalyzes the transformation of S-ribosylhomocysteine (RHC) to homocysteine (HC) and 4,5-dihydroxy-2,3-pentadione (DPD). The protein is S-ribosylhomocysteine lyase of Lactobacillus acidophilus (strain ATCC 700396 / NCK56 / N2 / NCFM).